The primary structure comprises 778 residues: Tastin (778 aa).

A compositionally biased stretch (basic and acidic residues) spans 1 to 11; sequence MTTRQATKDPL. Residues 1–115 form a disordered region; sequence MTTRQATKDP…PGPPAQTEAP (115 aa). A phosphoserine mark is found at Ser16, Ser98, and Ser170. The tract at residues 212-244 is disordered; it reads ISPSGPSFHPSTRPSFQELRRETAGSSRTSVSQ. The segment covering 235 to 244 has biased composition (polar residues); it reads AGSSRTSVSQ. Phosphoserine occurs at positions 324, 334, 344, and 362. Thr363 carries the post-translational modification Phosphothreonine. Position 376 is a phosphoserine (Ser376). Disordered regions lie at residues 406–425, 508–587, and 600–641; these read EGSG…NRTP, ECGE…AEPR, and PESS…RVEL. The span at 513-523 shows a compositional bias: pro residues; it reads QPCPPAEPGPP. A run of 4 repeats spans residues 516 to 548, 549 to 581, 582 to 614, and 615 to 647. The tract at residues 516 to 647 is 4 X 33 AA approximate tandem repeats; sequence PPAEPGPPEA…RVELGASEPC (132 aa). Basic and acidic residues predominate over residues 560 to 574; sequence CRSEPEIPESSRQEQ. The span at 612–622 shows a compositional bias: pro residues; the sequence is EPCPPAEPGPL.

Directly binds bystin, and indirectly trophinin. As to expression, strong expression at implantation sites. Was exclusively localized to the apical side of the syncytiotrophoblast. Also found in macrophages.

The protein localises to the cytoplasm. Could be involved with bystin and trophinin in a cell adhesion molecule complex that mediates an initial attachment of the blastocyst to uterine epithelial cells at the time of the embryo implantation. This is Tastin (TROAP) from Homo sapiens (Human).